We begin with the raw amino-acid sequence, 804 residues long: Leucine--tRNA ligase (804 aa).

Positions 39 to 50 (PYPSGKGLHVGH) match the 'HIGH' region motif. The 'KMSKS' region signature appears at 573 to 577 (KMSKS). K576 contacts ATP.

This sequence belongs to the class-I aminoacyl-tRNA synthetase family.

The protein localises to the cytoplasm. The catalysed reaction is tRNA(Leu) + L-leucine + ATP = L-leucyl-tRNA(Leu) + AMP + diphosphate. This is Leucine--tRNA ligase from Lactobacillus delbrueckii subsp. bulgaricus (strain ATCC 11842 / DSM 20081 / BCRC 10696 / JCM 1002 / NBRC 13953 / NCIMB 11778 / NCTC 12712 / WDCM 00102 / Lb 14).